A 161-amino-acid polypeptide reads, in one-letter code: Allophycocyanin subunit alpha 1 (161 aa).

N71 is subject to N4-methylasparagine. C81 lines the (2R,3E)-phycocyanobilin pocket.

It belongs to the phycobiliprotein family. Heterohexamer of two alpha chains, one alpha-B chain and three beta chains. Contains one covalently linked phycocyanobilin chromophore. The chromophore is added by phycocyanobilin lyase CpcS 1.

It is found in the cellular thylakoid membrane. Its function is as follows. Light-harvesting photosynthetic bile pigment-protein from the phycobiliprotein complex. Allophycocyanin has a maximum absorption at approximately 650 to 653 nanometers. This chain is Allophycocyanin subunit alpha 1 (apcA1), found in Nostoc sp. (strain PCC 7120 / SAG 25.82 / UTEX 2576).